The sequence spans 187 residues: Small ribosomal subunit protein uS7 (187 aa).

It belongs to the universal ribosomal protein uS7 family. Part of the 30S ribosomal subunit.

In terms of biological role, one of the primary rRNA binding proteins, it binds directly to 16S rRNA where it nucleates assembly of the head domain of the 30S subunit. Is located at the subunit interface close to the decoding center. The protein is Small ribosomal subunit protein uS7 of Methanosphaera stadtmanae (strain ATCC 43021 / DSM 3091 / JCM 11832 / MCB-3).